Consider the following 379-residue polypeptide: MIDYEVLRFIWWLLVGVLLIGFAVTDGFDMGVGMLTRFLGRNDTERRIMINSIAPHWDGNQVWLITAGGALFAAWPMVYAAAFSGFYVAMILVLASLFFRPVGFDYRSKIEETRWRNMWDWGIFIGSFVPPLVIGVAFGNLLQGVPFNVDEYLRLYYTGNFFQLLNPFGLLAGVVSVGMIITQGATYLQMRTVGELHLRTRATAQVAALVTLVCFALAGVWVMYGIDGYVVKSTMDHYAASNPLNKEVVREAGAWLVNFNNTPILWAIPALGVVLPLLTILTARMDKAAWAFVFSSLTLACIILTAGIAMFPFVMPSSTMMNASLTMWDATSSQLTLNVMTWVAVVLVPIILLYTAWCYWKMFGRITKEDIERNTHSLY.

Met-1 carries the post-translational modification N-formylmethionine. Residues 1-8 (MIDYEVLR) are Cytoplasmic-facing. The chain crosses the membrane as a helical span at residues 9-28 (FIWWLLVGVLLIGFAVTDGF). At 29-79 (DMGVGMLTRFLGRNDTERRIMINSIAPHWDGNQVWLITAGGALFAAWPMVY) the chain is on the periplasmic side. Residues 80–99 (AAAFSGFYVAMILVLASLFF) form a helical membrane-spanning segment. At 100–122 (RPVGFDYRSKIEETRWRNMWDWG) the chain is on the cytoplasmic side. The chain crosses the membrane as a helical span at residues 123 to 142 (IFIGSFVPPLVIGVAFGNLL). The Periplasmic segment spans residues 143–164 (QGVPFNVDEYLRLYYTGNFFQL). A helical transmembrane segment spans residues 165–184 (LNPFGLLAGVVSVGMIITQG). Residues 185-205 (ATYLQMRTVGELHLRTRATAQ) are Cytoplasmic-facing. The helical transmembrane segment at 206-225 (VAALVTLVCFALAGVWVMYG) threads the bilayer. At 226–262 (IDGYVVKSTMDHYAASNPLNKEVVREAGAWLVNFNNT) the chain is on the periplasmic side. The helical transmembrane segment at 263-282 (PILWAIPALGVVLPLLTILT) threads the bilayer. At 283 to 292 (ARMDKAAWAF) the chain is on the cytoplasmic side. The helical transmembrane segment at 293-312 (VFSSLTLACIILTAGIAMFP) threads the bilayer. Residues 313–336 (FVMPSSTMMNASLTMWDATSSQLT) lie on the Periplasmic side of the membrane. Residues 337-356 (LNVMTWVAVVLVPIILLYTA) traverse the membrane as a helical segment. At 357–379 (WCYWKMFGRITKEDIERNTHSLY) the chain is on the cytoplasmic side.

The protein belongs to the cytochrome ubiquinol oxidase subunit 2 family. In terms of assembly, heterodimer of subunits I and II. Heme b serves as cofactor. It depends on heme d cis-diol as a cofactor.

The protein localises to the cell inner membrane. The enzyme catalyses 2 a ubiquinol + O2(in) + 4 H(+)(in) = 2 a ubiquinone + 2 H2O(in) + 4 H(+)(out). Its pathway is energy metabolism; oxidative phosphorylation. Functionally, a terminal oxidase that produces a proton motive force by the vectorial transfer of protons across the inner membrane. It is the component of the aerobic respiratory chain of E.coli that predominates when cells are grown at low aeration. Generates a proton motive force using protons and electrons from opposite sides of the membrane to generate H(2)O, transferring 1 proton/electron. This Escherichia coli O157:H7 protein is Cytochrome bd-I ubiquinol oxidase subunit 2 (cydB).